The chain runs to 240 residues: Phosphoribosylaminoimidazole-succinocarboxamide synthase (240 aa).

This sequence belongs to the SAICAR synthetase family.

It carries out the reaction 5-amino-1-(5-phospho-D-ribosyl)imidazole-4-carboxylate + L-aspartate + ATP = (2S)-2-[5-amino-1-(5-phospho-beta-D-ribosyl)imidazole-4-carboxamido]succinate + ADP + phosphate + 2 H(+). Its pathway is purine metabolism; IMP biosynthesis via de novo pathway; 5-amino-1-(5-phospho-D-ribosyl)imidazole-4-carboxamide from 5-amino-1-(5-phospho-D-ribosyl)imidazole-4-carboxylate: step 1/2. This Wolbachia pipientis subsp. Culex pipiens (strain wPip) protein is Phosphoribosylaminoimidazole-succinocarboxamide synthase.